The primary structure comprises 366 residues: Beta sliding clamp (366 aa).

Belongs to the beta sliding clamp family. Forms a ring-shaped head-to-tail homodimer around DNA which binds and tethers DNA polymerases and other proteins to the DNA. The DNA replisome complex has a single clamp-loading complex (3 tau and 1 each of delta, delta', psi and chi subunits) which binds 3 Pol III cores (1 core on the leading strand and 2 on the lagging strand) each with a beta sliding clamp dimer. Additional proteins in the replisome are other copies of gamma, psi and chi, Ssb, DNA helicase and RNA primase.

The protein resides in the cytoplasm. Confers DNA tethering and processivity to DNA polymerases and other proteins. Acts as a clamp, forming a ring around DNA (a reaction catalyzed by the clamp-loading complex) which diffuses in an ATP-independent manner freely and bidirectionally along dsDNA. Initially characterized for its ability to contact the catalytic subunit of DNA polymerase III (Pol III), a complex, multichain enzyme responsible for most of the replicative synthesis in bacteria; Pol III exhibits 3'-5' exonuclease proofreading activity. The beta chain is required for initiation of replication as well as for processivity of DNA replication. This Chlamydia muridarum (strain MoPn / Nigg) protein is Beta sliding clamp (dnaN).